The sequence spans 289 residues: 4-diphosphocytidyl-2-C-methyl-D-erythritol kinase (289 aa).

K10 is a catalytic residue. 94-104 (PVAAGLAGGSS) contributes to the ATP binding site. D136 is an active-site residue.

Belongs to the GHMP kinase family. IspE subfamily.

The catalysed reaction is 4-CDP-2-C-methyl-D-erythritol + ATP = 4-CDP-2-C-methyl-D-erythritol 2-phosphate + ADP + H(+). Its pathway is isoprenoid biosynthesis; isopentenyl diphosphate biosynthesis via DXP pathway; isopentenyl diphosphate from 1-deoxy-D-xylulose 5-phosphate: step 3/6. In terms of biological role, catalyzes the phosphorylation of the position 2 hydroxy group of 4-diphosphocytidyl-2C-methyl-D-erythritol. The chain is 4-diphosphocytidyl-2-C-methyl-D-erythritol kinase from Bacillus pumilus (strain SAFR-032).